A 199-amino-acid chain; its full sequence is Recombination protein RecR (199 aa).

Residues 57–72 (CNLCNNFSEQEICPLC) form a C4-type zinc finger. The Toprim domain occupies 80–175 (TLLCIVEMPS…QVSRIARGLP (96 aa)).

It belongs to the RecR family.

Its function is as follows. May play a role in DNA repair. It seems to be involved in an RecBC-independent recombinational process of DNA repair. It may act with RecF and RecO. This is Recombination protein RecR from Methylobacillus flagellatus (strain ATCC 51484 / DSM 6875 / VKM B-1610 / KT).